Consider the following 612-residue polypeptide: Threonine--tRNA ligase (612 aa).

Positions 218 to 509 are catalytic; that stretch reads DHRKLGVELG…LSEHFGGNFP (292 aa). Zn(2+) contacts are provided by cysteine 310, histidine 361, and histidine 486.

This sequence belongs to the class-II aminoacyl-tRNA synthetase family. In terms of assembly, homodimer. It depends on Zn(2+) as a cofactor.

It localises to the cytoplasm. The catalysed reaction is tRNA(Thr) + L-threonine + ATP = L-threonyl-tRNA(Thr) + AMP + diphosphate + H(+). In terms of biological role, catalyzes the attachment of threonine to tRNA(Thr) in a two-step reaction: L-threonine is first activated by ATP to form Thr-AMP and then transferred to the acceptor end of tRNA(Thr). Also edits incorrectly charged L-seryl-tRNA(Thr). This chain is Threonine--tRNA ligase, found in Helicobacter pylori (strain P12).